Consider the following 275-residue polypeptide: Phosphite transport system permease protein PtxC (275 aa).

The next 5 helical transmembrane spans lie at 30-50, 88-108, 136-156, 221-241, and 249-269; these read LGQV…VGLL, LAMS…VAFV, LIMG…GVLA, ASTV…MGSL, and VAAI…FSGV. In terms of domain architecture, ABC transmembrane type-1 spans 84–267; sequence LIDTLAMSIA…AMVTLVDAFS (184 aa).

It belongs to the binding-protein-dependent transport system permease family.

It is found in the cell inner membrane. Its function is as follows. Probably forms part of a binding-protein-dependent phosphite transporter. Probably responsible for the translocation of the substrate across the membrane. In Stutzerimonas stutzeri (Pseudomonas stutzeri), this protein is Phosphite transport system permease protein PtxC (ptxC).